A 469-amino-acid chain; its full sequence is ATP synthase subunit beta (469 aa).

156–163 serves as a coordination point for ATP; it reads GGAGVGKT.

Belongs to the ATPase alpha/beta chains family. In terms of assembly, F-type ATPases have 2 components, CF(1) - the catalytic core - and CF(0) - the membrane proton channel. CF(1) has five subunits: alpha(3), beta(3), gamma(1), delta(1), epsilon(1). CF(0) has three main subunits: a(1), b(2) and c(9-12). The alpha and beta chains form an alternating ring which encloses part of the gamma chain. CF(1) is attached to CF(0) by a central stalk formed by the gamma and epsilon chains, while a peripheral stalk is formed by the delta and b chains.

The protein resides in the cell membrane. It catalyses the reaction ATP + H2O + 4 H(+)(in) = ADP + phosphate + 5 H(+)(out). Functionally, produces ATP from ADP in the presence of a proton gradient across the membrane. The catalytic sites are hosted primarily by the beta subunits. The sequence is that of ATP synthase subunit beta from Lactococcus lactis subsp. lactis (strain IL1403) (Streptococcus lactis).